The following is a 355-amino-acid chain: Fructose-1,6-bisphosphatase class 1 (355 aa).

Residues Glu94, Asp116, Leu118, and Asp119 each contribute to the Mg(2+) site. Residues 119–122, Asn211, and 263–265 each bind substrate; these read DGSS and YLY. Glu283 lines the Mg(2+) pocket.

Belongs to the FBPase class 1 family. In terms of assembly, homotetramer. It depends on Mg(2+) as a cofactor.

The protein resides in the cytoplasm. The enzyme catalyses beta-D-fructose 1,6-bisphosphate + H2O = beta-D-fructose 6-phosphate + phosphate. Its pathway is carbohydrate biosynthesis; Calvin cycle. In Rhodospirillum rubrum (strain ATCC 11170 / ATH 1.1.1 / DSM 467 / LMG 4362 / NCIMB 8255 / S1), this protein is Fructose-1,6-bisphosphatase class 1.